Here is a 396-residue protein sequence, read N- to C-terminus: Phosphoglycerate kinase (396 aa).

Substrate is bound by residues 21 to 23 (DFN), Arg-36, 59 to 62 (HLGK), Arg-119, and Arg-156. ATP is bound by residues Lys-206, Glu-325, and 352–355 (GGDS).

Belongs to the phosphoglycerate kinase family. As to quaternary structure, monomer.

The protein resides in the cytoplasm. The catalysed reaction is (2R)-3-phosphoglycerate + ATP = (2R)-3-phospho-glyceroyl phosphate + ADP. The protein operates within carbohydrate degradation; glycolysis; pyruvate from D-glyceraldehyde 3-phosphate: step 2/5. This Staphylococcus haemolyticus (strain JCSC1435) protein is Phosphoglycerate kinase.